The primary structure comprises 644 residues: Transcription factor cep-1 (644 aa).

A DNA-binding region spans residues 223–418 (EKWMEIDVLK…NFCEREDAKQ (196 aa)). Cys307, His310, Cys361, and Cys365 together coordinate Zn(2+). Residues 528–555 (TNYSFRTLTLSTAEYTKVVEFLAREAKV) form a required for tertiary structure stability of the protein region.

This sequence belongs to the p53 family. Homodimer. Interacts (via C-terminus domain) with prmt-5; not methylated by prmt-5. Interacts with cbp-1 (via HAT domain); cep-1 transcriptional activity may be inhibited by interaction with methylated cbp-1. Component of a complex that contains prmt-5 and cbp-1. Interacts with ape-1; the interaction inhibits pro-apoptotic activity of cep-1. Zn(2+) serves as cofactor. In terms of processing, phosphorylated in response to IR-induced DNA damage which is thought to be mediated by akt-1. Expressed in pharyngeal muscle and neurons.

It localises to the nucleus. Its function is as follows. Transcriptional activator that binds the same DNA consensus sequence as p53. Has a role in normal development to ensure proper meiotic chromosome segregation. Promotes apoptosis under conditions of cellular and genotoxic stress in response to DNA damage, hypoxia, or starvation. Regulates germline apoptosis in response to DNA damage. Its pro-apoptotic activity is inhibited when bound to ape-1 in vitro. Plays a role in cell cycle arrest in the germline in response to DNA damage by UV-C light. However, not required for survival in response to DNA damage induced by UV-C light, indicating that it is unlikely to be involved in DNA repair. Required for induction of ced-13 in response to DNA damage. Regulates DNA damage-induced apoptosis by inducing transcription of the programmed cell death activator egl-1. Regulates germline proliferation by activating phg-1. Modulates lifespan. This Caenorhabditis elegans protein is Transcription factor cep-1.